The sequence spans 217 residues: MNLVFLGPPGAGKGTQANLLTRTYEVPQISTGEILRAAVKSKTPMGVKAKEYMDQGALVPDSVVVGIVEERLASPDCASGFILDGFPRTVAQADALKQVLGALGKQIEHVVSFEVDKGVLLERIVGRRVCRACGRAFHVKFDPPLVDGVCDACGGELYQRDDDREDTMRRRLEVYDEQTAPLKSYYEGERLLRKVNALEPIEDVQRQIVKLVESCNG.

10–15 (GAGKGT) is an ATP binding site. The NMP stretch occupies residues 30–59 (STGEILRAAVKSKTPMGVKAKEYMDQGALV). AMP is bound by residues T31, R36, 57 to 59 (ALV), 85 to 88 (GFPR), and Q92. The interval 126-163 (GRRVCRACGRAFHVKFDPPLVDGVCDACGGELYQRDDD) is LID. R127 contacts ATP. Positions 130, 133, 150, and 153 each coordinate Zn(2+). Residues R160 and R171 each contribute to the AMP site. E199 serves as a coordination point for ATP.

This sequence belongs to the adenylate kinase family. Monomer.

It is found in the cytoplasm. The enzyme catalyses AMP + ATP = 2 ADP. Its pathway is purine metabolism; AMP biosynthesis via salvage pathway; AMP from ADP: step 1/1. Functionally, catalyzes the reversible transfer of the terminal phosphate group between ATP and AMP. Plays an important role in cellular energy homeostasis and in adenine nucleotide metabolism. In Geobacter sulfurreducens (strain ATCC 51573 / DSM 12127 / PCA), this protein is Adenylate kinase.